The primary structure comprises 617 residues: Dihydroxy-acid dehydratase (617 aa).

Residue D81 participates in Mg(2+) binding. C122 is a [2Fe-2S] cluster binding site. Residues D123 and K124 each coordinate Mg(2+). The residue at position 124 (K124) is an N6-carboxylysine. [2Fe-2S] cluster is bound at residue C197. E494 provides a ligand contact to Mg(2+). Residue S520 is the Proton acceptor of the active site.

The protein belongs to the IlvD/Edd family. As to quaternary structure, homodimer. Requires [2Fe-2S] cluster as cofactor. The cofactor is Mg(2+).

It catalyses the reaction (2R)-2,3-dihydroxy-3-methylbutanoate = 3-methyl-2-oxobutanoate + H2O. The catalysed reaction is (2R,3R)-2,3-dihydroxy-3-methylpentanoate = (S)-3-methyl-2-oxopentanoate + H2O. It functions in the pathway amino-acid biosynthesis; L-isoleucine biosynthesis; L-isoleucine from 2-oxobutanoate: step 3/4. Its pathway is amino-acid biosynthesis; L-valine biosynthesis; L-valine from pyruvate: step 3/4. Functionally, functions in the biosynthesis of branched-chain amino acids. Catalyzes the dehydration of (2R,3R)-2,3-dihydroxy-3-methylpentanoate (2,3-dihydroxy-3-methylvalerate) into 2-oxo-3-methylpentanoate (2-oxo-3-methylvalerate) and of (2R)-2,3-dihydroxy-3-methylbutanoate (2,3-dihydroxyisovalerate) into 2-oxo-3-methylbutanoate (2-oxoisovalerate), the penultimate precursor to L-isoleucine and L-valine, respectively. The chain is Dihydroxy-acid dehydratase from Parafrankia sp. (strain EAN1pec).